A 451-amino-acid polypeptide reads, in one-letter code: CBL-interacting protein kinase 10 (451 aa).

Residues 13-267 (YEIGKLLGQG…VSEIMEDPWF (255 aa)) enclose the Protein kinase domain. Residues 19–27 (LGQGSFAKV) and lysine 42 contribute to the ATP site. Catalysis depends on aspartate 135, which acts as the Proton acceptor. Positions 153-182 (DFGLSALAECKRQDGLLHTTCGTPAYVAPE) are activation loop. The region spanning 304 to 336 (INEGKQEAENLTSLNAFDIISLSSGFDLSAMFE) is the NAF domain. The tract at residues 341 to 370 (KEESKFTSTNTATTITKKLEDVAKNLRLKF) is PPI.

Belongs to the protein kinase superfamily. CAMK Ser/Thr protein kinase family. SNF1 subfamily. It depends on Mn(2+) as a cofactor.

It catalyses the reaction L-seryl-[protein] + ATP = O-phospho-L-seryl-[protein] + ADP + H(+). The enzyme catalyses L-threonyl-[protein] + ATP = O-phospho-L-threonyl-[protein] + ADP + H(+). Its function is as follows. CIPK serine-threonine protein kinases interact with CBL proteins. Binding of a CBL protein to the regulatory NAF domain of CIPK protein lead to the activation of the kinase in a calcium-dependent manner. The protein is CBL-interacting protein kinase 10 (CIPK10) of Oryza sativa subsp. japonica (Rice).